The following is a 2289-amino-acid chain: Protein Ycf2 (2289 aa).

1643-1650 (GSIGTGRS) is a binding site for ATP.

The protein belongs to the Ycf2 family.

It localises to the plastid. It is found in the chloroplast stroma. Its function is as follows. Probable ATPase of unknown function. Its presence in a non-photosynthetic plant (Epifagus virginiana) and experiments in tobacco indicate that it has an essential function which is probably not related to photosynthesis. The sequence is that of Protein Ycf2 from Capsella bursa-pastoris (Shepherd's purse).